The following is a 248-amino-acid chain: 1,2-phenylacetyl-CoA epoxidase, subunit C (248 aa).

Substrate-binding positions include 76–79 (QFSN) and 177–179 (IAL).

As to quaternary structure, forms a stable heterotetramer (dimer of heterodimers) with PaaA and a stable heterodimer with PaaB.

It participates in aromatic compound metabolism; phenylacetate degradation. In terms of biological role, component of 1,2-phenylacetyl-CoA epoxidase multicomponent enzyme system which catalyzes the reduction of phenylacetyl-CoA (PA-CoA) to form 1,2-epoxyphenylacetyl-CoA. The subunit C may be essential for structural integrity of the alpha subunit. In Escherichia coli (strain K12), this protein is 1,2-phenylacetyl-CoA epoxidase, subunit C (paaC).